The primary structure comprises 727 residues: MLQTPPDLPPVAEPVAEQVVEAVAPVPAPSPTIAVPGLDDSSLYIHRELSQLQFNIRVLEQALDENYPLLERLKFLLIFSSNLDEFFEIRVAGLKKQINFAREQAGADGLQPHQALARISELVHIEVERQYAILNDVLLPELEKHQIRFIRRRYWTPKLKTWVRRYFRDEIAPIITPIGLDPTHPFPLLVNKSLNFIVELEGVDAFGRDSGLAIIPAPRLLPRVIRVPEEVGGPGANYVFLSSMIHAHADDLFQGMKVKGCYQFRLTRNADLALDSEEVDDLARALRGELFSRRYGDAVRLEVADTCPKHLSDYLLKQFSLSESELYQVNGPVNLTRLFSITGLDSHPELQYTPFTPAIPKLLANADNIFSVISKQDILLMHPFESFTPVVDLLRQAAKDPHVLAVRQTLYRSGANSEIVDALVDAARNGKEVTAVIELRARFDEESNLQMASRLQAAGAVVIYGVVGFKTHAKMMLILRREQGEIVRYAHLGTGNYHAGNARLYTDYSLLTSDDALTEDVGKLFSQLIGMGKTLRMKKLLHAPFTLKKGMLDMIARETQFALEGKPAHIIAKFNSLTDAKVIKALYKASQSGVKIDLVVRGMCCLRPGIPGVSHNIQVRSIIGRFLEHTRVFYFLNGGEEQIYLSSADWMERNLDKRVETCFPVEGKKLLLRVKKELEGYLTDNTHAWTLQPDGRYVRSTPTGNQNPRSVQATLLERLSNPVLNVR.

Asparagine 82 contacts ATP. Positions 412 and 442 each coordinate Mg(2+). Histidine 472 (phosphohistidine intermediate) is an active-site residue. The ATP site is built by tyrosine 505, arginine 601, and histidine 629.

Belongs to the polyphosphate kinase 1 (PPK1) family. Mg(2+) serves as cofactor. An intermediate of this reaction is the autophosphorylated ppk in which a phosphate is covalently linked to a histidine residue through a N-P bond.

It catalyses the reaction [phosphate](n) + ATP = [phosphate](n+1) + ADP. In terms of biological role, catalyzes the reversible transfer of the terminal phosphate of ATP to form a long-chain polyphosphate (polyP). The polypeptide is Polyphosphate kinase (Pseudomonas putida (strain ATCC 47054 / DSM 6125 / CFBP 8728 / NCIMB 11950 / KT2440)).